A 73-amino-acid polypeptide reads, in one-letter code: UPF0499 protein NFIA_054990 (73 aa).

An N-terminal signal peptide occupies residues 1–20 (MKSFNLLSLSLLLAIASAAA). Intrachain disulfides connect Cys-46–Cys-60, Cys-50–Cys-63, and Cys-56–Cys-70.

Belongs to the UPF0499 family.

The protein resides in the secreted. The polypeptide is UPF0499 protein NFIA_054990 (Neosartorya fischeri (strain ATCC 1020 / DSM 3700 / CBS 544.65 / FGSC A1164 / JCM 1740 / NRRL 181 / WB 181) (Aspergillus fischerianus)).